Reading from the N-terminus, the 159-residue chain is 6,7-dimethyl-8-ribityllumazine synthase (159 aa).

5-amino-6-(D-ribitylamino)uracil is bound by residues Trp-26, Ser-58–Glu-60, and Val-80–Ile-82. A (2S)-2-hydroxy-3-oxobutyl phosphate-binding site is contributed by Gly-85–Thr-86. Residue His-88 is the Proton donor of the active site. Phe-113 provides a ligand contact to 5-amino-6-(D-ribitylamino)uracil. Arg-127 serves as a coordination point for (2S)-2-hydroxy-3-oxobutyl phosphate.

It belongs to the DMRL synthase family.

It carries out the reaction (2S)-2-hydroxy-3-oxobutyl phosphate + 5-amino-6-(D-ribitylamino)uracil = 6,7-dimethyl-8-(1-D-ribityl)lumazine + phosphate + 2 H2O + H(+). It participates in cofactor biosynthesis; riboflavin biosynthesis; riboflavin from 2-hydroxy-3-oxobutyl phosphate and 5-amino-6-(D-ribitylamino)uracil: step 1/2. Catalyzes the formation of 6,7-dimethyl-8-ribityllumazine by condensation of 5-amino-6-(D-ribitylamino)uracil with 3,4-dihydroxy-2-butanone 4-phosphate. This is the penultimate step in the biosynthesis of riboflavin. The protein is 6,7-dimethyl-8-ribityllumazine synthase of Renibacterium salmoninarum (strain ATCC 33209 / DSM 20767 / JCM 11484 / NBRC 15589 / NCIMB 2235).